The following is a 411-amino-acid chain: 1-deoxy-D-xylulose 5-phosphate reductoisomerase (411 aa).

Positions 23, 24, 25, 26, 49, 50, 51, and 137 each coordinate NADPH. Residue K138 coordinates 1-deoxy-D-xylulose 5-phosphate. Residue E139 coordinates NADPH. Residue D163 coordinates Mn(2+). 4 residues coordinate 1-deoxy-D-xylulose 5-phosphate: S164, E165, S199, and H222. Position 165 (E165) interacts with Mn(2+). G228 lines the NADPH pocket. 1-deoxy-D-xylulose 5-phosphate-binding residues include S235, N240, K241, and E244. Mn(2+) is bound at residue E244.

The protein belongs to the DXR family. The cofactor is Mg(2+). It depends on Mn(2+) as a cofactor.

It catalyses the reaction 2-C-methyl-D-erythritol 4-phosphate + NADP(+) = 1-deoxy-D-xylulose 5-phosphate + NADPH + H(+). The protein operates within isoprenoid biosynthesis; isopentenyl diphosphate biosynthesis via DXP pathway; isopentenyl diphosphate from 1-deoxy-D-xylulose 5-phosphate: step 1/6. Catalyzes the NADPH-dependent rearrangement and reduction of 1-deoxy-D-xylulose-5-phosphate (DXP) to 2-C-methyl-D-erythritol 4-phosphate (MEP). This is 1-deoxy-D-xylulose 5-phosphate reductoisomerase from Mannheimia succiniciproducens (strain KCTC 0769BP / MBEL55E).